Reading from the N-terminus, the 296-residue chain is uncharacterized protein (296 aa).

An FAD-binding FR-type domain is found at 1–95 (MYKIVSKKEL…VGPLGVPSEF (95 aa)).

This is an uncharacterized protein from Clostridium beijerinckii (Clostridium MP).